We begin with the raw amino-acid sequence, 96 residues long: MPAIEVGRICVKVKGREAGSKCVIVDIIDDNFVLVTGPKDISGVKRRRVNILHLEPTDKKIDIQKGASDEEVRKKIEEAGLTDYMKERIKIKIPTL.

Belongs to the eukaryotic ribosomal protein eL14 family.

In Saccharolobus islandicus (strain M.14.25 / Kamchatka #1) (Sulfolobus islandicus), this protein is Large ribosomal subunit protein eL14.